We begin with the raw amino-acid sequence, 412 residues long: Putative competence-damage inducible protein (412 aa).

It belongs to the CinA family.

The chain is Putative competence-damage inducible protein from Bacillus cytotoxicus (strain DSM 22905 / CIP 110041 / 391-98 / NVH 391-98).